The chain runs to 170 residues: Translationally-controlled tumor protein homolog (170 aa).

Residues 1–170 form the TCTP domain; the sequence is MLIYSDIITG…WKHGLKETKV (170 aa).

Belongs to the TCTP family.

The protein resides in the cytoplasm. It localises to the cytoskeleton. Involved in protein synthesis. Involved in microtubule stabilization. This Neurospora crassa (strain ATCC 24698 / 74-OR23-1A / CBS 708.71 / DSM 1257 / FGSC 987) protein is Translationally-controlled tumor protein homolog.